A 481-amino-acid polypeptide reads, in one-letter code: Glutamyl-tRNA(Gln) amidotransferase subunit A (481 aa).

Residues lysine 76 and serine 151 each act as charge relay system in the active site. Serine 175 acts as the Acyl-ester intermediate in catalysis.

Belongs to the amidase family. GatA subfamily. Heterotrimer of A, B and C subunits.

The catalysed reaction is L-glutamyl-tRNA(Gln) + L-glutamine + ATP + H2O = L-glutaminyl-tRNA(Gln) + L-glutamate + ADP + phosphate + H(+). Functionally, allows the formation of correctly charged Gln-tRNA(Gln) through the transamidation of misacylated Glu-tRNA(Gln) in organisms which lack glutaminyl-tRNA synthetase. The reaction takes place in the presence of glutamine and ATP through an activated gamma-phospho-Glu-tRNA(Gln). The protein is Glutamyl-tRNA(Gln) amidotransferase subunit A of Neisseria meningitidis serogroup C (strain 053442).